The following is a 314-amino-acid chain: tRNA-cytidine(32) 2-sulfurtransferase (314 aa).

A PP-loop motif motif is present at residues 49–54; sequence SGGKDS. [4Fe-4S] cluster-binding residues include Cys-124, Cys-127, and Cys-215.

It belongs to the TtcA family. As to quaternary structure, homodimer. The cofactor is Mg(2+). [4Fe-4S] cluster is required as a cofactor.

The protein resides in the cytoplasm. The enzyme catalyses cytidine(32) in tRNA + S-sulfanyl-L-cysteinyl-[cysteine desulfurase] + AH2 + ATP = 2-thiocytidine(32) in tRNA + L-cysteinyl-[cysteine desulfurase] + A + AMP + diphosphate + H(+). It functions in the pathway tRNA modification. Catalyzes the ATP-dependent 2-thiolation of cytidine in position 32 of tRNA, to form 2-thiocytidine (s(2)C32). The sulfur atoms are provided by the cysteine/cysteine desulfurase (IscS) system. This Histophilus somni (strain 2336) (Haemophilus somnus) protein is tRNA-cytidine(32) 2-sulfurtransferase.